The chain runs to 75 residues: Large ribosomal subunit protein bL31 (75 aa).

It belongs to the bacterial ribosomal protein bL31 family. Type A subfamily. Part of the 50S ribosomal subunit.

In terms of biological role, binds the 23S rRNA. The polypeptide is Large ribosomal subunit protein bL31 (Rhodopseudomonas palustris (strain BisB18)).